A 58-amino-acid polypeptide reads, in one-letter code: Large ribosomal subunit protein bL32c (58 aa).

The interval 1-23 (MAVPKKRTSKAKKNARKSVWKKK) is disordered.

The protein belongs to the bacterial ribosomal protein bL32 family.

It localises to the plastid. The protein resides in the chloroplast. The polypeptide is Large ribosomal subunit protein bL32c (rpl32-A) (Trieres chinensis (Marine centric diatom)).